Here is a 101-residue protein sequence, read N- to C-terminus: Rho GTPase-activating protein 39 (101 aa).

The region spanning 1-96 (YEQCIAHYES…VLIQHLDTSF (96 aa)) is the Rho-GAP domain.

As to expression, preoptic area and testis.

The polypeptide is Rho GTPase-activating protein 39 (Arhgap39) (Rattus norvegicus (Rat)).